The sequence spans 404 residues: Probable thioredoxin reductase ARB_06224 (404 aa).

Residues 1-22 (MGVQRLALALIAFTSALTSVIA) form the signal peptide. 67–75 (DEGIYRNGA) contributes to the FAD binding site. The cysteines at positions 172 and 175 are disulfide-linked. An N-linked (GlcNAc...) asparagine glycan is attached at Asn-213. Position 334 to 343 (334 to 343 (DANNDGSTNG)) interacts with FAD.

It belongs to the class-II pyridine nucleotide-disulfide oxidoreductase family. As to quaternary structure, homodimer. FAD is required as a cofactor.

The protein resides in the secreted. The enzyme catalyses [thioredoxin]-dithiol + NADP(+) = [thioredoxin]-disulfide + NADPH + H(+). The sequence is that of Probable thioredoxin reductase ARB_06224 from Arthroderma benhamiae (strain ATCC MYA-4681 / CBS 112371) (Trichophyton mentagrophytes).